The following is a 261-amino-acid chain: Protein TfpB (261 aa).

This Moraxella bovis protein is Protein TfpB (tfpB).